Consider the following 665-residue polypeptide: Methionine--tRNA ligase (665 aa).

Positions 12 to 22 match the 'HIGH' region motif; that stretch reads YYPSGKLHIGS. A 'KMSKS' region motif is present at residues 308–312; the sequence is KMSKS. An ATP-binding site is contributed by lysine 311. Residues 562 to 665 enclose the tRNA-binding domain; sequence TFDAVEIRVA…SSVPNGSIIG (104 aa).

It belongs to the class-I aminoacyl-tRNA synthetase family. MetG type 2B subfamily. As to quaternary structure, homodimer.

It is found in the cytoplasm. The enzyme catalyses tRNA(Met) + L-methionine + ATP = L-methionyl-tRNA(Met) + AMP + diphosphate. Is required not only for elongation of protein synthesis but also for the initiation of all mRNA translation through initiator tRNA(fMet) aminoacylation. The sequence is that of Methionine--tRNA ligase (metG) from Streptococcus pyogenes serotype M1.